The chain runs to 404 residues: MPNKITKEALTFDDVSLIPRKSSVLPSEVSLKTQLTKNISLNIPFLSSAMDTVTESQMAIAIAKEGGIGIIHKNMSIEAQRKEIEKVKTYKFQKTINTNGDTNEQKPEIFTAKQHLEKSDAYKNAEHKEDFPNACKDLNNKLRVGAAVSIDIDTIERVEELVKAHVDILVIDSAHGHSTRIIELIKKIKTKYPNLDLIAGNIVTKEAALDLISVGADCLKVGIGPGSICTTRIVAGVGVPQITAICDVYEACNNTNICIIADGGIRFSGDVVKAIAAGADSVMIGNLFAGTKESPSEEIIYNGKKFKSYVGMGSISAMKRGSKSRYFQLENNEPKKLVPEGIEGMVPYSGKLKDILTQLKGGLMSGMGYLGAATISDLKINSKFVKISHSSLKESHPHDVFSIT.

Residues Asp-172 and 222–224 (GIG) contribute to the NAD(+) site. 2 residues coordinate K(+): Gly-224 and Gly-226. IMP is bound at residue Ser-227. Cys-229 is a binding site for K(+). The Thioimidate intermediate role is filled by Cys-229. Residues 262 to 264 (DGG), 285 to 286 (GN), and 309 to 313 (YVGMG) each bind IMP. Arg-325 functions as the Proton acceptor in the catalytic mechanism. Position 340 (Glu-340) interacts with IMP. The K(+) site is built by Glu-394, Ser-395, and His-396.

It belongs to the IMPDH/GMPR family. Homotetramer. K(+) serves as cofactor.

It carries out the reaction IMP + NAD(+) + H2O = XMP + NADH + H(+). It functions in the pathway purine metabolism; XMP biosynthesis via de novo pathway; XMP from IMP: step 1/1. With respect to regulation, mycophenolic acid (MPA) is a non-competitive inhibitor that prevents formation of the closed enzyme conformation by binding to the same site as the amobile flap. In contrast, mizoribine monophosphate (MZP) is a competitive inhibitor that induces the closed conformation. MPA is a potent inhibitor of mammalian IMPDHs but a poor inhibitor of the bacterial enzymes. MZP is a more potent inhibitor of bacterial IMPDH. Its function is as follows. Catalyzes the conversion of inosine 5'-phosphate (IMP) to xanthosine 5'-phosphate (XMP), the first committed and rate-limiting step in the de novo synthesis of guanine nucleotides, and therefore plays an important role in the regulation of cell growth. Essential for mouse infection by tick bite and critical for the survival in environments that appear to lack sufficient amounts of guanine, guanosine, and/or deoxyguanosine to support spirochete growth, such as mammalian host tissues. This Borreliella burgdorferi (strain ATCC 35210 / DSM 4680 / CIP 102532 / B31) (Borrelia burgdorferi) protein is Inosine-5'-monophosphate dehydrogenase.